The following is a 508-amino-acid chain: MTVTYTARVANARFGGFSQLLLLWRGSIYKLLWRELLCFLGLYMALSAAYRFLLAEEQKRYFEKLVIYCDQYASLIPVSFVLGFYVTLVVHRWWNQYLCMPLPDALMCIVAGTVHGRDDRGRLYRRTLMRYAGLSAVLILRSVSTAVFKRFPTIDHVVEAGFMTREERKKFENLNSSYNKYWVPCVWFSSLAAQARREGRIRDNSALKLLLEELNVFRSKCGMLFHYDWISIPLVYTQVVTIAVYSYFLACLIGRQFLDPAQGYKDHTLDLCVPIFTLLQFFFYAGWLKVAEQLINPFGEDDDDFETNFLIDRNFQVSMLAVDEMYDDLAMLEKDLYWDAAEARAPYTAATAFLLQQPSFQGSTFDIALAKEDMQFQRLDGVDGPLGEVHGDFLQRLLPAGAGSVGPLGRRLSLLRRKNSCVSEASTAASCGCAGAADGGGVECGCGDPLLDPSLREPELEPPACPEPPAPIPGPTPEPFTTVSIPGPRAPAPPWLPSPIGEEEESPA.

The Cytoplasmic segment spans residues 1–31 (MTVTYTARVANARFGGFSQLLLLWRGSIYKL). Ala-10 serves as a coordination point for Ca(2+). The chain crosses the membrane as a helical span at residues 32-51 (LWRELLCFLGLYMALSAAYR). Residues 52 to 60 (FLLAEEQKR) are Extracellular-facing. The chain crosses the membrane as a helical span at residues 61–82 (YFEKLVIYCDQYASLIPVSFVL). Residues 83 to 238 (GFYVTLVVHR…WISIPLVYTQ (156 aa)) lie on the Cytoplasmic side of the membrane. The chain crosses the membrane as a helical span at residues 239 to 255 (VVTIAVYSYFLACLIGR). Residues 256 to 274 (QFLDPAQGYKDHTLDLCVP) lie on the Extracellular side of the membrane. A helical membrane pass occupies residues 275–288 (IFTLLQFFFYAGWL). Over 289–508 (KVAEQLINPF…PIGEEEESPA (220 aa)) the chain is Cytoplasmic. Ca(2+)-binding residues include Gln-293, Asn-296, Asp-301, and Asp-304. Residues 455 to 508 (LREPELEPPACPEPPAPIPGPTPEPFTTVSIPGPRAPAPPWLPSPIGEEEESPA) form a disordered region. Composition is skewed to pro residues over residues 461–478 (EPPA…PTPE) and 488–497 (PRAPAPPWLP).

The protein belongs to the anion channel-forming bestrophin (TC 1.A.46) family. Calcium-sensitive chloride channel subfamily. As to quaternary structure, pentamer. Interacts with GLUL; this interaction tethers a fraction of GLUL to the membrane, causing a decrease of cytosolic glutamine synthase (GS) activity and inhibits the chloride channel activity of BEST2 by affecting the gating at the aperture in the absence of intracellular glutamate. Expressed in mucin-secreting colonic goblet cells.

The protein resides in the cell membrane. It localises to the basolateral cell membrane. It catalyses the reaction chloride(in) = chloride(out). The enzyme catalyses hydrogencarbonate(in) = hydrogencarbonate(out). The catalysed reaction is L-glutamate(out) = L-glutamate(in). It carries out the reaction iodide(out) = iodide(in). It catalyses the reaction L-glutamine(out) = L-glutamine(in). With respect to regulation, chloride channel activity is allosterically inhibited by GLUL/glutamine synthase (GS) which affects the gating at the aperture in the absence of intracellular glutamate. Inhibitory effect of GLUL is relieved upon increasing of intracellular level of L-glutamate. Ligand-gated anion channel that allows the movement of anions across cell membranes when activated by calcium (Ca2+). Transports a large specter of anions, namely mediates the movement of chloride, L-glutamate and iodide. Calcium-binding triggers the dilation of the aperture, but calcium-dependent gating is only effective when the size of the passing anion is bigger than the closed aperture. Mediates the calcium-activated hydrogencarbonate movement and participates in colonic hydrogencarbonate secretion concomitant with mucin secretion. In non-pigmented epithelium (NPE), mediates the efflux of intracellular L-glutamate; binding of intracellular L-glutamate activates and open both the neck and the aperture of the channel, leading to L-glutamate exit promoting chloride influx movement from the extracellular side in trans. Also exhibits a directional permeability for intracellular glutamine, in a similar manner as for L-glutamate. The chain is Bestrophin-2 from Mus musculus (Mouse).